The primary structure comprises 144 residues: Complexin-1 (144 aa).

The segment covering 1 to 10 has biased composition (gly residues); that stretch reads MVSFLGGGLL. The segment at 1 to 119 is disordered; the sequence is MVSFLGGGLL…SGFPKNLDDL (119 aa). Composition is skewed to basic and acidic residues over residues 18–27 and 36–86; these read LEEKEDKKEG and AEAK…EGRL. The stretch at 29 to 67 forms a coiled coil; that stretch reads EEEDPEIAEAKREAEEKRNEKYRKMEEEREVMRQGIRDK. The span at 103–112 shows a compositional bias: polar residues; that stretch reads LQSSAQSSGF. Cysteine 141 bears the Cysteine methyl ester mark. Residue cysteine 141 is the site of S-farnesyl cysteine attachment. Positions 142 to 144 are cleaved as a propeptide — removed in mature form; that stretch reads NLQ.

Belongs to the complexin/synaphin family. As to quaternary structure, binds to the SNARE core complex containing SNAP25, synaptobrevin and syntaxin-1. In terms of tissue distribution, expressed in a subset of neurons in the central nervous system, including large serotoninergic Retzius neurons and pressure-sensitive P cells.

It is found in the membrane. Functionally, positively regulates a late step in synaptic vesicle exocytosis. The protein is Complexin-1 (cpx1) of Hirudo medicinalis (Medicinal leech).